Consider the following 179-residue polypeptide: Large ribosomal subunit protein uL5 (179 aa).

The protein belongs to the universal ribosomal protein uL5 family. Part of the 50S ribosomal subunit; part of the 5S rRNA/L5/L18/L25 subcomplex. Contacts the 5S rRNA and the P site tRNA. Forms a bridge to the 30S subunit in the 70S ribosome.

In terms of biological role, this is one of the proteins that bind and probably mediate the attachment of the 5S RNA into the large ribosomal subunit, where it forms part of the central protuberance. In the 70S ribosome it contacts protein S13 of the 30S subunit (bridge B1b), connecting the 2 subunits; this bridge is implicated in subunit movement. Contacts the P site tRNA; the 5S rRNA and some of its associated proteins might help stabilize positioning of ribosome-bound tRNAs. The sequence is that of Large ribosomal subunit protein uL5 from Shewanella woodyi (strain ATCC 51908 / MS32).